A 374-amino-acid chain; its full sequence is tRNA-specific 2-thiouridylase MnmA (374 aa).

ATP contacts are provided by residues 10 to 17 (AMSGGVDS) and leucine 36. Cysteine 111 acts as the Nucleophile in catalysis. Cysteine 111 and cysteine 209 form a disulfide bridge. Glycine 135 contributes to the ATP binding site. The interval 159-161 (KDQ) is interaction with tRNA. The active-site Cysteine persulfide intermediate is the cysteine 209.

It belongs to the MnmA/TRMU family.

The protein localises to the cytoplasm. The catalysed reaction is S-sulfanyl-L-cysteinyl-[protein] + uridine(34) in tRNA + AH2 + ATP = 2-thiouridine(34) in tRNA + L-cysteinyl-[protein] + A + AMP + diphosphate + H(+). In terms of biological role, catalyzes the 2-thiolation of uridine at the wobble position (U34) of tRNA, leading to the formation of s(2)U34. The polypeptide is tRNA-specific 2-thiouridylase MnmA (Acidobacterium capsulatum (strain ATCC 51196 / DSM 11244 / BCRC 80197 / JCM 7670 / NBRC 15755 / NCIMB 13165 / 161)).